The primary structure comprises 293 residues: Cell wall protein PGA31 (293 aa).

Positions 1–18 (MKFLTAASLLTLSSSALA) are cleaved as a signal peptide. Asparagine 131 carries an N-linked (GlcNAc...) asparagine glycan. The interval 161–187 (ESASSSSSSAAPEPTASSSEAPKETPV) is disordered. The span at 163 to 180 (ASSSSSSAAPEPTASSSE) shows a compositional bias: low complexity. The N-linked (GlcNAc...) asparagine glycan is linked to asparagine 190. Residues 233-262 (VPSKTASSEAAPPKTTVDSVSKPAPSGKKP) form a disordered region. Glycine 271 carries GPI-anchor amidated glycine lipidation. The propeptide at 272-293 (AANALTGGSVAIAVAAAIGLVF) is removed in mature form.

Belongs to the SRP1/TIP1 family. The GPI-anchor is attached to the protein in the endoplasmic reticulum and serves to target the protein to the cell surface. There, the glucosamine-inositol phospholipid moiety is cleaved off and the GPI-modified mannoprotein is covalently attached via its lipidless GPI glycan remnant to the 1,6-beta-glucan of the outer cell wall layer.

It is found in the secreted. Its subcellular location is the cell wall. It localises to the membrane. Component of the cell wall involved in virulence which plays a role in the relationship between C.albicans and the host. Involved in the regulation or assembly of chitin within the cell wall. The sequence is that of Cell wall protein PGA31 (PGA31) from Candida albicans (strain SC5314 / ATCC MYA-2876) (Yeast).